The primary structure comprises 309 residues: Beta-ketoacyl-[acyl-carrier-protein] synthase III (309 aa).

Catalysis depends on residues Cys-111 and His-236. Residues 237 to 241 (QANVR) are ACP-binding. The active site involves Asn-266.

It belongs to the thiolase-like superfamily. FabH family. As to quaternary structure, homodimer.

It is found in the cytoplasm. It carries out the reaction malonyl-[ACP] + acetyl-CoA + H(+) = 3-oxobutanoyl-[ACP] + CO2 + CoA. It participates in lipid metabolism; fatty acid biosynthesis. Its function is as follows. Catalyzes the condensation reaction of fatty acid synthesis by the addition to an acyl acceptor of two carbons from malonyl-ACP. Catalyzes the first condensation reaction which initiates fatty acid synthesis and may therefore play a role in governing the total rate of fatty acid production. Possesses both acetoacetyl-ACP synthase and acetyl transacylase activities. Its substrate specificity determines the biosynthesis of branched-chain and/or straight-chain of fatty acids. The sequence is that of Beta-ketoacyl-[acyl-carrier-protein] synthase III from Aquifex aeolicus (strain VF5).